A 408-amino-acid chain; its full sequence is tRNA wybutosine-synthesizing protein 2 homolog (408 aa).

Residues Ser201, Lys208, Glu248, and 276 to 277 (DN) each bind S-adenosyl-L-methionine.

The protein belongs to the class I-like SAM-binding methyltransferase superfamily. TRM5/TYW2 family.

It catalyses the reaction 4-demethylwyosine(37) in tRNA(Phe) + S-adenosyl-L-methionine = 4-demethyl-7-[(3S)-3-amino-3-carboxypropyl]wyosine(37) in tRNA(Phe) + S-methyl-5'-thioadenosine + H(+). The protein operates within tRNA modification; wybutosine-tRNA(Phe) biosynthesis. Functionally, S-adenosyl-L-methionine-dependent transferase that acts as a component of the wybutosine biosynthesis pathway. Wybutosine is a hyper modified guanosine with a tricyclic base found at the 3'-position adjacent to the anticodon of eukaryotic phenylalanine tRNA. Catalyzes the transfer of the alpha-amino-alpha-carboxypropyl (acp) group from S-adenosyl-L-methionine to the C-7 position of 4-demethylwyosine (imG-14) to produce wybutosine-86. The sequence is that of tRNA wybutosine-synthesizing protein 2 homolog (trmt12) from Danio rerio (Zebrafish).